The sequence spans 647 residues: XK-related protein 4 (647 aa).

Basic and acidic residues predominate over residues 1 to 15 (MAAKSDGRLKMKKSS). A disordered region spans residues 1 to 44 (MAAKSDGRLKMKKSSDVAFTPLQNSDNSGSVQGLAPGLPSGSGA). Over residues 21-31 (PLQNSDNSGSV) the composition is skewed to polar residues. A run of 2 helical transmembrane segments spans residues 112–132 (WILA…WLAV) and 142–162 (WFGL…VFSF). Phosphoserine is present on Ser197. The tract at residues 197-238 (SAAGEGEVRPSTPQRQASNASKSNIAATNSGSNSNGATRTSG) is disordered. Residues 207–236 (STPQRQASNASKSNIAATNSGSNSNGATRT) show a composition bias toward polar residues. The next 8 membrane-spanning stretches (helical) occupy residues 245–265 (CSFC…GQIW), 303–323 (HLLA…CIIV), 328–348 (LQAL…WALA), 362–382 (KPIS…TIAA), 393–415 (VFQL…WIVH), 425–445 (WEEI…WFNV), 454–474 (LFIY…LWYL), and 484–504 (FAIP…VFML).

The protein belongs to the XK family. In terms of assembly, homodimer; homodimerization takes place upon caspase cleavage. Interacts with the processed C-terminus of XRCC4 (protein XRCC4, C-terminus); interaction promotes the phospholipid scramblase activity. Undergoes proteolytic processing by caspase-3 (CASP3), caspase-6 (CASP6) and caspase-7 (CASP7) to generate the XK-related protein 4, processed form, leading to its activation. Highly expressed in expressed in the brain; weakly expressed in the spleen, thymus, uterus, blood vessels and fetus.

It localises to the cell membrane. It carries out the reaction a 1,2-diacyl-sn-glycero-3-phospho-L-serine(in) = a 1,2-diacyl-sn-glycero-3-phospho-L-serine(out). Phospholipid scramblase activity is activated upon caspase cleavage to generate the XK-related protein 4, processed form. Does not act prior the onset of apoptosis. With respect to regulation, homodimerizes upon caspase cleavage. Phospholipid scramblase activity is activated following interaction with the processed C-terminus of XRCC4 (protein XRCC4, C-terminus). Phospholipid scramblase that promotes phosphatidylserine exposure on apoptotic cell surface. Phosphatidylserine is a specific marker only present at the surface of apoptotic cells and acts as a specific signal for engulfment. This Mus musculus (Mouse) protein is XK-related protein 4.